We begin with the raw amino-acid sequence, 197 residues long: MRKADIVRETKETRVALTVDLDGTGRSAISTGIGFLDHMLDLLARHARFDLEIKADGDLHVDFHHTTEDVGIVLGQALKKALGDMRGITRYADVLLPMDETLTRVALDISGRPFLVFRTEFAVPKIGEFDTELVREFFQAFASSAGVTLHVETLYGVNAHHIAESCFKGLARVLRAAVAVDPAAAGEIPSTKGALGT.

Belongs to the imidazoleglycerol-phosphate dehydratase family.

It is found in the cytoplasm. It carries out the reaction D-erythro-1-(imidazol-4-yl)glycerol 3-phosphate = 3-(imidazol-4-yl)-2-oxopropyl phosphate + H2O. The protein operates within amino-acid biosynthesis; L-histidine biosynthesis; L-histidine from 5-phospho-alpha-D-ribose 1-diphosphate: step 6/9. This chain is Imidazoleglycerol-phosphate dehydratase, found in Xanthobacter autotrophicus (strain ATCC BAA-1158 / Py2).